Reading from the N-terminus, the 240-residue chain is Urease accessory protein UreF (240 aa).

It belongs to the UreF family. UreD, UreF and UreG form a complex that acts as a GTP-hydrolysis-dependent molecular chaperone, activating the urease apoprotein by helping to assemble the nickel containing metallocenter of UreC. The UreE protein probably delivers the nickel.

It is found in the cytoplasm. Required for maturation of urease via the functional incorporation of the urease nickel metallocenter. The chain is Urease accessory protein UreF from Rhodopseudomonas palustris (strain TIE-1).